A 217-amino-acid chain; its full sequence is GTP-binding protein Rit2 (217 aa).

GTP-binding positions include 27 to 34 (GAGGVGKS), 74 to 78 (DTAGQ), and 133 to 136 (NKID).

This sequence belongs to the small GTPase superfamily. Ras family. Interacts with AFDN, the C-terminal domain of RALGDS and RLF, but not with RIN1 and PIK3CA. RLF binds exclusively to the active GTP-bound form. Binds calmodulin. Interacts with PLXNB3.

Its subcellular location is the nucleus. The protein resides in the cell membrane. The enzyme catalyses GTP + H2O = GDP + phosphate + H(+). With respect to regulation, alternates between an inactive form bound to GDP and an active form bound to GTP. In terms of biological role, binds and exchanges GTP and GDP. The polypeptide is GTP-binding protein Rit2 (Rit2) (Rattus norvegicus (Rat)).